We begin with the raw amino-acid sequence, 558 residues long: Urocanate hydratase (558 aa).

Residues 54–55 (GG), Gln-132, 178–180 (GMG), Glu-198, 244–245 (NA), 265–269 (QTSAH), 275–276 (YL), and Tyr-324 contribute to the NAD(+) site. Cys-412 is a catalytic residue. Gly-494 provides a ligand contact to NAD(+).

It belongs to the urocanase family. NAD(+) is required as a cofactor.

Its subcellular location is the cytoplasm. It carries out the reaction 4-imidazolone-5-propanoate = trans-urocanate + H2O. The protein operates within amino-acid degradation; L-histidine degradation into L-glutamate; N-formimidoyl-L-glutamate from L-histidine: step 2/3. In terms of biological role, catalyzes the conversion of urocanate to 4-imidazolone-5-propionate. In Acinetobacter baumannii (strain AB307-0294), this protein is Urocanate hydratase.